The sequence spans 208 residues: FMN-dependent NADH:quinone oxidoreductase (208 aa).

FMN is bound by residues 17 to 19 (SNS), 99 to 102 (MWNL), and 143 to 146 (SRGG).

This sequence belongs to the azoreductase type 1 family. Homodimer. The cofactor is FMN.

It carries out the reaction 2 a quinone + NADH + H(+) = 2 a 1,4-benzosemiquinone + NAD(+). The enzyme catalyses N,N-dimethyl-1,4-phenylenediamine + anthranilate + 2 NAD(+) = 2-(4-dimethylaminophenyl)diazenylbenzoate + 2 NADH + 2 H(+). Quinone reductase that provides resistance to thiol-specific stress caused by electrophilic quinones. Its function is as follows. Also exhibits azoreductase activity. Catalyzes the reductive cleavage of the azo bond in aromatic azo compounds to the corresponding amines. This is FMN-dependent NADH:quinone oxidoreductase from Staphylococcus carnosus (strain TM300).